Consider the following 374-residue polypeptide: Histidinol-phosphate aminotransferase 1 (374 aa).

K232 carries the N6-(pyridoxal phosphate)lysine modification.

This sequence belongs to the class-II pyridoxal-phosphate-dependent aminotransferase family. Histidinol-phosphate aminotransferase subfamily. As to quaternary structure, homodimer. It depends on pyridoxal 5'-phosphate as a cofactor.

It catalyses the reaction L-histidinol phosphate + 2-oxoglutarate = 3-(imidazol-4-yl)-2-oxopropyl phosphate + L-glutamate. It participates in amino-acid biosynthesis; L-histidine biosynthesis; L-histidine from 5-phospho-alpha-D-ribose 1-diphosphate: step 7/9. The polypeptide is Histidinol-phosphate aminotransferase 1 (hisC1) (Ralstonia nicotianae (strain ATCC BAA-1114 / GMI1000) (Ralstonia solanacearum)).